A 154-amino-acid polypeptide reads, in one-letter code: uncharacterized protein (154 aa).

In terms of domain architecture, HotDog ACOT-type spans 13–128 (SKGVLLLRTL…VFTFVAVDNN (116 aa)).

This sequence belongs to the acyl coenzyme A hydrolase family.

This is an uncharacterized protein from Haemophilus influenzae (strain ATCC 51907 / DSM 11121 / KW20 / Rd).